The primary structure comprises 323 residues: tRNA U34 carboxymethyltransferase (323 aa).

Carboxy-S-adenosyl-L-methionine-binding positions include Lys-91, Trp-105, Lys-110, Gly-130, 152–154, 181–182, Met-196, Tyr-200, and Arg-315; these read DPT and IE.

It belongs to the class I-like SAM-binding methyltransferase superfamily. CmoB family. Homotetramer.

It catalyses the reaction carboxy-S-adenosyl-L-methionine + 5-hydroxyuridine(34) in tRNA = 5-carboxymethoxyuridine(34) in tRNA + S-adenosyl-L-homocysteine + H(+). Functionally, catalyzes carboxymethyl transfer from carboxy-S-adenosyl-L-methionine (Cx-SAM) to 5-hydroxyuridine (ho5U) to form 5-carboxymethoxyuridine (cmo5U) at position 34 in tRNAs. The chain is tRNA U34 carboxymethyltransferase from Salmonella enteritidis PT4 (strain P125109).